A 280-amino-acid chain; its full sequence is Inner membrane ABC transporter permease protein YcjP (280 aa).

Residues 1–10 (MATNKRTLSR) lie on the Cytoplasmic side of the membrane. Residues 11–31 (IGFYCGLALFLIITLFPFFVM) form a helical membrane-spanning segment. Topologically, residues 32 to 53 (LMTSFKGAKEAISLHPTLLPQQ) are periplasmic. The helical transmembrane segment at 54–74 (WTLEHYVDIFNPMIFPFVDYF) threads the bilayer. Residues 74–265 (FRNSLVVSVV…LPVVIMYALS (192 aa)) form the ABC transmembrane type-1 domain. The Cytoplasmic portion of the chain corresponds to 75 to 77 (RNS). A helical membrane pass occupies residues 78 to 98 (LVVSVVSSVVAVFLGILGAYA). Topologically, residues 99 to 117 (LSRLRFKGRMTINASFYTV) are periplasmic. A helical membrane pass occupies residues 118–138 (YMFSGILLVVPLFKIITALGI). At 139–140 (YD) the chain is on the cytoplasmic side. A helical membrane pass occupies residues 141-161 (TEMALIITMVTQTLPTAVFML). Residues 162–189 (KSYFDTIPDEIEEAAMMDGLNRLQIIFR) lie on the Periplasmic side of the membrane. Residues 190–210 (ITVPLAMSGLISVFVYCFMVA) form a helical membrane-spanning segment. Over 211 to 214 (WNDY) the chain is Cytoplasmic. The chain crosses the membrane as a helical span at residues 215 to 235 (LFASIFLSSASNFTLPVGLNA). Over 236–242 (LFSTPDY) the chain is Periplasmic. A helical membrane pass occupies residues 243–263 (IWGRMMAASLVTALPVVIMYA). At 264-280 (LSERFIKSGLTAGGVKG) the chain is on the cytoplasmic side.

The protein belongs to the binding-protein-dependent transport system permease family. MalFG subfamily.

The protein localises to the cell inner membrane. Its function is as follows. Probably part of the binding-protein-dependent transport system YcjNOP. Probably responsible for the translocation of the substrate across the membrane. In Escherichia coli (strain K12), this protein is Inner membrane ABC transporter permease protein YcjP (ycjP).